Here is a 259-residue protein sequence, read N- to C-terminus: Triosephosphate isomerase (259 aa).

10 to 12 (NWK) contributes to the substrate binding site. His100 (electrophile) is an active-site residue. The Proton acceptor role is filled by Glu172. Substrate is bound by residues Gly178, Ser218, and 239-240 (GG).

Belongs to the triosephosphate isomerase family. In terms of assembly, homodimer.

It localises to the cytoplasm. It carries out the reaction D-glyceraldehyde 3-phosphate = dihydroxyacetone phosphate. Its pathway is carbohydrate biosynthesis; gluconeogenesis. The protein operates within carbohydrate degradation; glycolysis; D-glyceraldehyde 3-phosphate from glycerone phosphate: step 1/1. Functionally, involved in the gluconeogenesis. Catalyzes stereospecifically the conversion of dihydroxyacetone phosphate (DHAP) to D-glyceraldehyde-3-phosphate (G3P). This is Triosephosphate isomerase from Corynebacterium glutamicum (strain ATCC 13032 / DSM 20300 / JCM 1318 / BCRC 11384 / CCUG 27702 / LMG 3730 / NBRC 12168 / NCIMB 10025 / NRRL B-2784 / 534).